The following is a 183-amino-acid chain: ATP synthase subunit delta (183 aa).

It belongs to the ATPase delta chain family. F-type ATPases have 2 components, F(1) - the catalytic core - and F(0) - the membrane proton channel. F(1) has five subunits: alpha(3), beta(3), gamma(1), delta(1), epsilon(1). F(0) has three main subunits: a(1), b(2) and c(10-14). The alpha and beta chains form an alternating ring which encloses part of the gamma chain. F(1) is attached to F(0) by a central stalk formed by the gamma and epsilon chains, while a peripheral stalk is formed by the delta and b chains.

It localises to the cell inner membrane. In terms of biological role, f(1)F(0) ATP synthase produces ATP from ADP in the presence of a proton or sodium gradient. F-type ATPases consist of two structural domains, F(1) containing the extramembraneous catalytic core and F(0) containing the membrane proton channel, linked together by a central stalk and a peripheral stalk. During catalysis, ATP synthesis in the catalytic domain of F(1) is coupled via a rotary mechanism of the central stalk subunits to proton translocation. Its function is as follows. This protein is part of the stalk that links CF(0) to CF(1). It either transmits conformational changes from CF(0) to CF(1) or is implicated in proton conduction. In Thermotoga neapolitana (strain ATCC 49049 / DSM 4359 / NBRC 107923 / NS-E), this protein is ATP synthase subunit delta.